Here is a 445-residue protein sequence, read N- to C-terminus: Ribosomal protein uS12 methylthiotransferase RimO (445 aa).

An MTTase N-terminal domain is found at 11–121; that stretch reads PKISFVSLGC…VLDAVHRASP (111 aa). [4Fe-4S] cluster contacts are provided by cysteine 20, cysteine 56, cysteine 85, cysteine 152, cysteine 156, and cysteine 159. A Radical SAM core domain is found at 138 to 375; sequence LTPRHYAYLK…MARQQKISAR (238 aa). Residues 378–444 form the TRAM domain; the sequence is KRKVGTRQQI…EYDLHGTVAG (67 aa).

The protein belongs to the methylthiotransferase family. RimO subfamily. The cofactor is [4Fe-4S] cluster.

The protein localises to the cytoplasm. The enzyme catalyses L-aspartate(89)-[ribosomal protein uS12]-hydrogen + (sulfur carrier)-SH + AH2 + 2 S-adenosyl-L-methionine = 3-methylsulfanyl-L-aspartate(89)-[ribosomal protein uS12]-hydrogen + (sulfur carrier)-H + 5'-deoxyadenosine + L-methionine + A + S-adenosyl-L-homocysteine + 2 H(+). Functionally, catalyzes the methylthiolation of an aspartic acid residue of ribosomal protein uS12. The sequence is that of Ribosomal protein uS12 methylthiotransferase RimO from Bradyrhizobium sp. (strain ORS 278).